We begin with the raw amino-acid sequence, 155 residues long: Nucleoside diphosphate kinase, cytosolic (155 aa).

Positions 16, 64, 92, 98, 109, and 119 each coordinate ATP. The Pros-phosphohistidine intermediate role is filled by H122.

This sequence belongs to the NDK family. Homohexamer. Mg(2+) is required as a cofactor.

Its subcellular location is the cytoplasm. The catalysed reaction is a 2'-deoxyribonucleoside 5'-diphosphate + ATP = a 2'-deoxyribonucleoside 5'-triphosphate + ADP. It catalyses the reaction a ribonucleoside 5'-diphosphate + ATP = a ribonucleoside 5'-triphosphate + ADP. In terms of biological role, major role in the synthesis of nucleoside triphosphates other than ATP. This is Nucleoside diphosphate kinase, cytosolic (ndkC-1) from Dictyostelium discoideum (Social amoeba).